The chain runs to 157 residues: UPF0225 protein PMI1492 (157 aa).

The protein belongs to the UPF0225 family.

In Proteus mirabilis (strain HI4320), this protein is UPF0225 protein PMI1492.